Consider the following 682-residue polypeptide: Histone deacetylase 18 (682 aa).

The interval 59–382 (KVGLVYDETM…SLACVQVLLE (324 aa)) is histone deacetylase. Residue H191 is the Proton donor/acceptor of the active site. Positions 231, 233, and 324 each coordinate Zn(2+). Positions 430 to 608 (SAERNSADAL…DKELQEDRSR (179 aa)) form a coiled coil.

Belongs to the histone deacetylase family. HD type 2 subfamily. Zn(2+) serves as cofactor. Expressed in roots, stems, young rosette leaves, flowers and siliques.

It localises to the nucleus. Its subcellular location is the cytoplasm. It carries out the reaction N(6)-acetyl-L-lysyl-[histone] + H2O = L-lysyl-[histone] + acetate. Its function is as follows. Responsible for the deacetylation of lysine residues on the N-terminal part of the core histones (H2A, H2B, H3 and H4). Histone deacetylation gives a tag for epigenetic repression and plays an important role in transcriptional regulation, cell cycle progression and developmental events. Histone deacetylases act via the formation of large multiprotein complexes. Required for appropriate cellular patterning in the root epidermis. Involved in the differentiation of hair and non-hair cells in the root epidermis. Is not directly involved in the regulation of the expression of pattern genes. Regulates the transcription of certain kinase genes, which are components of a positional information relay system, by changing their histone acetylation status. The chain is Histone deacetylase 18 from Arabidopsis thaliana (Mouse-ear cress).